The primary structure comprises 454 residues: Pup--protein ligase (454 aa).

E9 is a binding site for Mg(2+). R53 is an ATP binding site. Y55 contacts Mg(2+). D57 (proton acceptor) is an active-site residue. E63 serves as a coordination point for Mg(2+). T66 and W420 together coordinate ATP.

The protein belongs to the Pup ligase/Pup deamidase family. Pup-conjugating enzyme subfamily.

It catalyses the reaction ATP + [prokaryotic ubiquitin-like protein]-L-glutamate + [protein]-L-lysine = ADP + phosphate + N(6)-([prokaryotic ubiquitin-like protein]-gamma-L-glutamyl)-[protein]-L-lysine.. Its pathway is protein degradation; proteasomal Pup-dependent pathway. The protein operates within protein modification; protein pupylation. Catalyzes the covalent attachment of the prokaryotic ubiquitin-like protein modifier Pup to the proteasomal substrate proteins, thereby targeting them for proteasomal degradation. This tagging system is termed pupylation. The ligation reaction involves the side-chain carboxylate of the C-terminal glutamate of Pup and the side-chain amino group of a substrate lysine. This is Pup--protein ligase from Arthrobacter sp. (strain FB24).